The chain runs to 224 residues: Small ribosomal subunit protein uS3 (224 aa).

The KH type-2 domain occupies 39–107 (VRKYIQNALA…PVHINIEEIR (69 aa)).

The protein belongs to the universal ribosomal protein uS3 family. In terms of assembly, part of the 30S ribosomal subunit. Forms a tight complex with proteins S10 and S14.

Its function is as follows. Binds the lower part of the 30S subunit head. Binds mRNA in the 70S ribosome, positioning it for translation. The polypeptide is Small ribosomal subunit protein uS3 (Saccharophagus degradans (strain 2-40 / ATCC 43961 / DSM 17024)).